A 314-amino-acid chain; its full sequence is 1,4-dihydroxy-2-naphthoyl-CoA synthase (314 aa).

Substrate is bound by residues arginine 58, 103–107 (SGGDQ), tyrosine 115, 157–161 (WAAGG), threonine 184, serine 190, tyrosine 287, and lysine 302.

It belongs to the enoyl-CoA hydratase/isomerase family. MenB subfamily.

It catalyses the reaction 2-succinylbenzoyl-CoA + H(+) = 1,4-dihydroxy-2-naphthoyl-CoA + H2O. It participates in quinol/quinone metabolism; 1,4-dihydroxy-2-naphthoate biosynthesis; 1,4-dihydroxy-2-naphthoate from chorismate: step 6/7. Its pathway is quinol/quinone metabolism; menaquinone biosynthesis. Functionally, converts o-succinylbenzoyl-CoA (OSB-CoA) to 1,4-dihydroxy-2-naphthoyl-CoA (DHNA-CoA). This is 1,4-dihydroxy-2-naphthoyl-CoA synthase from Mycobacterium tuberculosis (strain CDC 1551 / Oshkosh).